Here is a 211-residue protein sequence, read N- to C-terminus: Shikimate kinase (211 aa).

The disordered stretch occupies residues 1-22 (MHFRYNYRMQRSKTPNTKNSDT). The span at 12–22 (SKTPNTKNSDT) shows a compositional bias: polar residues. An ATP-binding site is contributed by 36–41 (GSGKTT). Residue Thr-40 participates in Mg(2+) binding. Substrate contacts are provided by Asp-58, Arg-82, and Gly-104. Arg-142 provides a ligand contact to ATP. A substrate-binding site is contributed by Arg-161. Residue Gln-178 coordinates ATP.

This sequence belongs to the shikimate kinase family. As to quaternary structure, monomer. Mg(2+) serves as cofactor.

It is found in the cytoplasm. The catalysed reaction is shikimate + ATP = 3-phosphoshikimate + ADP + H(+). Its pathway is metabolic intermediate biosynthesis; chorismate biosynthesis; chorismate from D-erythrose 4-phosphate and phosphoenolpyruvate: step 5/7. In terms of biological role, catalyzes the specific phosphorylation of the 3-hydroxyl group of shikimic acid using ATP as a cosubstrate. The protein is Shikimate kinase of Nitrosomonas europaea (strain ATCC 19718 / CIP 103999 / KCTC 2705 / NBRC 14298).